A 108-amino-acid chain; its full sequence is UPF0060 membrane protein DSY4629 (108 aa).

4 consecutive transmembrane segments (helical) span residues 5–25 (IILF…VWLW), 31–51 (PFWY…IPTL), 60–80 (VYAA…WGID), and 86–106 (NYDW…LWAP).

Belongs to the UPF0060 family.

The protein localises to the cell membrane. In Desulfitobacterium hafniense (strain Y51), this protein is UPF0060 membrane protein DSY4629.